A 335-amino-acid chain; its full sequence is Phenylalanine--tRNA ligase alpha subunit (335 aa).

Residue glutamate 262 coordinates Mg(2+).

Belongs to the class-II aminoacyl-tRNA synthetase family. Phe-tRNA synthetase alpha subunit type 1 subfamily. Tetramer of two alpha and two beta subunits. It depends on Mg(2+) as a cofactor.

Its subcellular location is the cytoplasm. The enzyme catalyses tRNA(Phe) + L-phenylalanine + ATP = L-phenylalanyl-tRNA(Phe) + AMP + diphosphate + H(+). This Prochlorococcus marinus subsp. pastoris (strain CCMP1986 / NIES-2087 / MED4) protein is Phenylalanine--tRNA ligase alpha subunit.